The following is a 207-amino-acid chain: Ribosomal RNA large subunit methyltransferase E (207 aa).

S-adenosyl-L-methionine contacts are provided by Gly-60, Trp-62, Asp-80, Asp-96, and Asp-121. Lys-161 functions as the Proton acceptor in the catalytic mechanism.

The protein belongs to the class I-like SAM-binding methyltransferase superfamily. RNA methyltransferase RlmE family.

It is found in the cytoplasm. It carries out the reaction uridine(2552) in 23S rRNA + S-adenosyl-L-methionine = 2'-O-methyluridine(2552) in 23S rRNA + S-adenosyl-L-homocysteine + H(+). Specifically methylates the uridine in position 2552 of 23S rRNA at the 2'-O position of the ribose in the fully assembled 50S ribosomal subunit. In Azotobacter vinelandii (strain DJ / ATCC BAA-1303), this protein is Ribosomal RNA large subunit methyltransferase E.